The following is a 341-amino-acid chain: Major histocompatibility complex class I-related protein 1 (341 aa).

Positions 1–18 (MMLLLPLLAVFLVKRSHT) are cleaved as a signal peptide. Residues 19–105 (RTHSLRYFRL…RHLQRHYNHS (87 aa)) form an alpha-1 region. Residues 19–197 (RTHSLRYFRL…EYGRDTLERT (179 aa)) are antigen-binding cleft. At 19–296 (RTHSLRYFRL…APRESGDILR (278 aa)) the chain is on the extracellular side. 8-(9H-purin-6-yl)-2-oxa-8-azabicyclo[3.3.1]nona-3,6-diene-4,6-dicarbaldehyde contacts are provided by tyrosine 25 and arginine 27. 5-(2-oxoethylideneamino)-6-(D-ribitylamino)uracil-binding residues include arginine 27, serine 42, and lysine 61. The 5-(2-oxopropylideneamino)-6-(D-ribitylamino)uracil site is built by arginine 27, serine 42, and lysine 61. Residues arginine 27, serine 42, and lysine 61 each coordinate 7-hydroxy-6-methyl-8-(1-D-ribityl)lumazine. 8-(9H-purin-6-yl)-2-oxa-8-azabicyclo[3.3.1]nona-3,6-diene-4,6-dicarbaldehyde contacts are provided by lysine 61 and histidine 76. Lysine 61 contacts 2-amino-4-oxopteridine-6-carbaldehyde. Lysine 61 lines the pyridoxal pocket. An N-linked (GlcNAc...) asparagine glycan is attached at asparagine 103. The segment at 106–197 (GLHTYQRMIG…EYGRDTLERT (92 aa)) is alpha-2. Arginine 112 is a binding site for 8-(9H-purin-6-yl)-2-oxa-8-azabicyclo[3.3.1]nona-3,6-diene-4,6-dicarbaldehyde. Arginine 112, tyrosine 170, and glutamine 171 together coordinate 5-(2-oxoethylideneamino)-6-(D-ribitylamino)uracil. Residues arginine 112, tyrosine 170, and glutamine 171 each contribute to the 5-(2-oxopropylideneamino)-6-(D-ribitylamino)uracil site. 7-hydroxy-6-methyl-8-(1-D-ribityl)lumazine is bound by residues arginine 112, tyrosine 170, and glutamine 171. 2 disulfide bridges follow: cysteine 116-cysteine 179 and cysteine 218-cysteine 274. An alpha-3 region spans residues 198–289 (EHPVVRTTRK…GRQMVLEAPR (92 aa)). The region spanning 200 to 301 (PVVRTTRKET…GDILRVSTIS (102 aa)) is the Ig-like C1-type domain. Residues 290 to 296 (ESGDILR) form a connecting peptide region. Residues 297-317 (VSTISGTTILIIALAGVGVLI) form a helical membrane-spanning segment. Residues 318-341 (WRRSQELKEVMYQPTQVNEGSSPS) lie on the Cytoplasmic side of the membrane.

The protein belongs to the MHC class I family. As to quaternary structure, heterotrimer that consists of MR1, B2M and metabolite antigen. Major classes of metabolite ligands presented by MR1 include riboflavin-related antigens, pyrimidines and ribityl lumazines, nucleobase adducts and folate derivatives. Forms reversible covalent Schiff base complexes with microbial pyrimidine-based metabolite, which serves as a molecular switch triggering complete folding, stable association with B2M and translocation of the ternary complex from endoplasmic reticulum to the plasma membrane. Alternatively, forms non-Schiff base complexes with ribityl lumazines. On antigen-presenting cells, the ternary complex interacts with TCR on MR1-restricted CD4- or CD8-positive T cell subsets. Interacts with TAPBP and TAPBPL chaperones in the endoplasmic reticulum. TAPBP associated or not with MHC class I peptide loading complex binds ligand-free MR1 or MR1-B2M complex, providing for stable MR1 pools ready for metabolite antigen processing. TAPBPL interacts with MR1 in a ligand-independent way; this interaction may stabilize MR1 pool and facilitate ligand loading and dissociation. Structurally, MR1-B2M heterodimer adopts a topology similar to classical MHC class I molecules, with alpha-1 and alpha-2 domains of MR1 forming the antigen-binding cleft composed of two alpha-helices resting on a floor of 7-stranded anti-parallel beta-pleated sheet. N-glycosylated. As to expression, highly expressed thymus. Expressed in liver, kidney, spleen, heart, brain, lung, skeletal muscle and testis.

The protein localises to the cell membrane. Its subcellular location is the endoplasmic reticulum membrane. It is found in the golgi apparatus membrane. It localises to the early endosome membrane. The protein resides in the late endosome membrane. Its function is as follows. Antigen-presenting molecule specialized in displaying microbial pyrimidine-based metabolites to alpha-beta T cell receptors (TCR) on innate-type mucosal-associated invariant T (MAIT) cells. In complex with B2M preferentially presents riboflavin-derived metabolites to semi-invariant TRAV1 TCRs on MAIT cells, guiding immune surveillance of the microbial metabolome at mucosal epithelial barriers. Signature pyrimidine-based microbial antigens are generated via non-enzymatic condensation of metabolite intermediates of the riboflavin pathway with by-products arising from other metabolic pathways such as glycolysis. Typical potent antigenic metabolites are 5-(2-oxoethylideneamino)-6-D-ribitylaminouracil (5-OE-RU) and 5-(2-oxopropylideneamino)-6-D-ribitylaminouracil (5-OP-RU), products of condensation of 5-amino-6-D-ribityaminouracil (5-A-RU) with glyoxal or methylglyoxal by-products, respectively. May present microbial antigens to various TRAV1-negative MAIT cell subsets, providing for unique recognition of diverse microbes, including pathogens that do not synthesize riboflavin. Upon antigen recognition, elicits rapid innate-type MAIT cell activation to eliminate pathogenic microbes by directly killing infected cells. During T cell development, drives thymic selection and post-thymic terminal differentiation of MAIT cells in a process dependent on commensal microflora. Acts as an immune sensor of cancer cell metabolome. May present a tumor-specific or -associated metabolite essential for cancer cell survival to a pan-cancer TCR on a non-MAIT CD8-positive T cell clone, triggering T cell-mediated killing of a wide range of cancer cell types. May present tumor-enriched pyridoxal and pyridoxal 5'-phosphate antigens, enabling preferential recognition of cancer cells. Presents nucleobase carbonyl adducts generated during oxidative stress. Captures M3Ade, a nucleobase adduct composed of one adenine modified by a malondialdehyde trimer, for recognition by MR1-restricted T cell clones expressing a polyclonal TCR repertoire. This chain is Major histocompatibility complex class I-related protein 1, found in Mus musculus (Mouse).